We begin with the raw amino-acid sequence, 284 residues long: Esterase alnB (284 aa).

Active-site charge relay system residues include S93, D226, and H255.

It belongs to the LovG family.

It participates in polyketide biosynthesis. Esterase; part of the gene cluster that mediates the biosynthesis of asperlin, a polyketide showing anti-inflammatory, antitumor and antibiotic activities. The first step of the asperlin biosynthesis is the production of the intermediate 2,4,6-octatrienoic acid by the highly redusing polyketide synthase alnA with cleavage of the PKS product by the esterase alnB. 2,4,6-octatrienoic acid is further converted to asperlin via several steps involving the remaining enzymes from the cluster. The polypeptide is Esterase alnB (Emericella nidulans (strain FGSC A4 / ATCC 38163 / CBS 112.46 / NRRL 194 / M139) (Aspergillus nidulans)).